We begin with the raw amino-acid sequence, 453 residues long: Na(+)/H(+) antiporter NhaA (453 aa).

12 helical membrane passes run 27–47, 78–98, 114–134, 143–163, 172–192, 201–221, 222–242, 249–269, 316–336, 346–366, 385–405, and 421–441; these read FLHI…AALM, LHFW…GMEI, ILPI…YFSF, GWAV…ALLG, IILL…IAFF, GLVI…IGFA, SAWL…VTGI, VILG…PLTI, PWVA…VSFA, FLIV…GIIT, WAGI…SIFV, and IGVL…GLIY.

It belongs to the NhaA Na(+)/H(+) (TC 2.A.33) antiporter family.

It is found in the cell inner membrane. It catalyses the reaction Na(+)(in) + 2 H(+)(out) = Na(+)(out) + 2 H(+)(in). In terms of biological role, na(+)/H(+) antiporter that extrudes sodium in exchange for external protons. The chain is Na(+)/H(+) antiporter NhaA from Bartonella henselae (strain ATCC 49882 / DSM 28221 / CCUG 30454 / Houston 1) (Rochalimaea henselae).